Here is an 837-residue protein sequence, read N- to C-terminus: GRIP1-associated protein 1 (837 aa).

Alanine 2 carries the post-translational modification N-acetylalanine. The stretch at 4–158 (ALSEEEFQRM…ALQERYGKEA (155 aa)) forms a coiled coil. 4 disordered regions span residues 161-180 (PSAVSEGQGDPPGDVLPISL), 555-577 (KGKEEELQNVRDQLQQAQEERDG), 647-666 (SEMNSPSRTQTGDSSSVSSF), and 677-702 (SSAIPARSLSSSPQAQPPRPAELSDE). Residues 204–637 (EQLQGLESSK…LQEILTNSKS (434 aa)) are a coiled coil. Residues 648 to 666 (EMNSPSRTQTGDSSSVSSF) show a composition bias toward polar residues. A phosphoserine mark is found at serine 651, serine 662, serine 664, serine 665, serine 684, serine 686, serine 687, and serine 688. A compositionally biased stretch (low complexity) spans 678-690 (SAIPARSLSSSPQ). Coiled coils occupy residues 697 to 731 (AELSDEEVAELFQRLAETQQEKWMLEEKVKHLEVS) and 781 to 810 (DENLREMNKKLQNMLEEQLTKNMHLHKDME). Serine 826 bears the Phosphoserine mark.

In terms of assembly, interacts with GRIP1, GRIP2 and AMPA receptors. Interacts (via C-terminus) with MAPK8/JNK1 and with MAP3K1/MEKK1; the interaction promotes MAP3K1-mediated phosphorylation of MAPK8. Interacts (via N-terminus) with RAB4A (in GTP-bound form). Interacts (via C-terminus) with STX12. Proteolytically cleaved by caspase-3. A minor C-terminal proteolytic fragment of 30 kDa is produced. Proteolytic cleavage is required for JNK signaling activation. Expressed in the central nervous system; especially in neurons.

The protein resides in the early endosome membrane. It is found in the recycling endosome membrane. Its subcellular location is the cell projection. The protein localises to the axon. It localises to the dendrite. The protein resides in the synapse. Functionally, regulates the endosomal recycling back to the neuronal plasma membrane, possibly by connecting early and late recycling endosomal domains and promoting segregation of recycling endosomes from early endosomal membranes. Involved in the localization of recycling endosomes to dendritic spines, thereby playing a role in the maintenance of dendritic spine morphology. Required for the activity-induced AMPA receptor recycling to dendrite membranes and for long-term potentiation and synaptic plasticity. In terms of biological role, functions as a scaffold protein in neurons to facilitate MAP3K1/MEKK1-mediated activation of the JNK1 kinase by phosphorylation, possibly by bringing MAP3K1/MEKK1 and JNK1 in close proximity. The polypeptide is GRIP1-associated protein 1 (Gripap1) (Rattus norvegicus (Rat)).